Here is an 87-residue protein sequence, read N- to C-terminus: Large ribosomal subunit protein bL27 (87 aa).

Residues 1–23 (MAHKKGTGSTRNGRDSNAQRLGV) form a disordered region. Positions 7–19 (TGSTRNGRDSNAQ) are enriched in polar residues.

The protein belongs to the bacterial ribosomal protein bL27 family.

This Synechocystis sp. (strain ATCC 27184 / PCC 6803 / Kazusa) protein is Large ribosomal subunit protein bL27 (rpmA).